Consider the following 490-residue polypeptide: Asparagine--tRNA ligase (490 aa).

The protein belongs to the class-II aminoacyl-tRNA synthetase family. As to quaternary structure, homodimer.

The protein resides in the cytoplasm. It carries out the reaction tRNA(Asn) + L-asparagine + ATP = L-asparaginyl-tRNA(Asn) + AMP + diphosphate + H(+). The chain is Asparagine--tRNA ligase from Rhodopirellula baltica (strain DSM 10527 / NCIMB 13988 / SH1).